The chain runs to 535 residues: Formate--tetrahydrofolate ligase (535 aa).

50–57 (TPAGEGKT) is a binding site for ATP.

It belongs to the formate--tetrahydrofolate ligase family.

It catalyses the reaction (6S)-5,6,7,8-tetrahydrofolate + formate + ATP = (6R)-10-formyltetrahydrofolate + ADP + phosphate. Its pathway is one-carbon metabolism; tetrahydrofolate interconversion. In Picrophilus torridus (strain ATCC 700027 / DSM 9790 / JCM 10055 / NBRC 100828 / KAW 2/3), this protein is Formate--tetrahydrofolate ligase.